The chain runs to 118 residues: UPF0342 protein ABC1519 (118 aa).

It belongs to the UPF0342 family.

This Shouchella clausii (strain KSM-K16) (Alkalihalobacillus clausii) protein is UPF0342 protein ABC1519.